The sequence spans 72 residues: Translation initiation factor IF-1 (72 aa).

Residues 1–72 form the S1-like domain; the sequence is MSKDDVIQMQ…SRARIVFRAK (72 aa).

The protein belongs to the IF-1 family. As to quaternary structure, component of the 30S ribosomal translation pre-initiation complex which assembles on the 30S ribosome in the order IF-2 and IF-3, IF-1 and N-formylmethionyl-tRNA(fMet); mRNA recruitment can occur at any time during PIC assembly.

Its subcellular location is the cytoplasm. In terms of biological role, one of the essential components for the initiation of protein synthesis. Stabilizes the binding of IF-2 and IF-3 on the 30S subunit to which N-formylmethionyl-tRNA(fMet) subsequently binds. Helps modulate mRNA selection, yielding the 30S pre-initiation complex (PIC). Upon addition of the 50S ribosomal subunit IF-1, IF-2 and IF-3 are released leaving the mature 70S translation initiation complex. The protein is Translation initiation factor IF-1 of Methylibium petroleiphilum (strain ATCC BAA-1232 / LMG 22953 / PM1).